A 568-amino-acid polypeptide reads, in one-letter code: Lipoprotein LpqB (568 aa).

The N-terminal stretch at 1 to 23 (MSKISTKLKALSAVLSVTTLVAG) is a signal peptide. The N-palmitoyl cysteine moiety is linked to residue Cys-24. A lipid anchor (S-diacylglycerol cysteine) is attached at Cys-24.

Belongs to the LpqB lipoprotein family.

Its subcellular location is the cell membrane. In Corynebacterium glutamicum (strain R), this protein is Lipoprotein LpqB.